The following is a 234-amino-acid chain: Small ribosomal subunit protein uS3 (234 aa).

Positions 39–107 (IRKFLKKELY…EVSINIKEVK (69 aa)) constitute a KH type-2 domain.

Belongs to the universal ribosomal protein uS3 family. As to quaternary structure, part of the 30S ribosomal subunit. Forms a tight complex with proteins S10 and S14.

In terms of biological role, binds the lower part of the 30S subunit head. Binds mRNA in the 70S ribosome, positioning it for translation. The chain is Small ribosomal subunit protein uS3 from Helicobacter pylori (strain G27).